The primary structure comprises 148 residues: Nucleoside diphosphate kinase A (148 aa).

Positions 9, 57, 85, 91, 102, and 112 each coordinate ATP. The active-site Pros-phosphohistidine intermediate is the His-115.

It belongs to the NDK family. Requires Mg(2+) as cofactor.

The catalysed reaction is a 2'-deoxyribonucleoside 5'-diphosphate + ATP = a 2'-deoxyribonucleoside 5'-triphosphate + ADP. It catalyses the reaction a ribonucleoside 5'-diphosphate + ATP = a ribonucleoside 5'-triphosphate + ADP. In terms of biological role, major role in the synthesis of nucleoside triphosphates other than ATP. The ATP gamma phosphate is transferred to the NDP beta phosphate via a ping-pong mechanism, using a phosphorylated active-site intermediate. This chain is Nucleoside diphosphate kinase A, found in Flaveria bidentis (Coastal plain yellowtops).